Here is a 123-residue protein sequence, read N- to C-terminus: Thioredoxin H-type (123 aa).

Residues 2 to 119 form the Thioredoxin domain; the sequence is AATAELIPAG…IEAKLLKHSQ (118 aa). Residues Cys-45 and Cys-48 are joined by a disulfide bond.

This sequence belongs to the thioredoxin family. Plant H-type subfamily.

The protein localises to the cytoplasm. In terms of biological role, participates in various redox reactions through the reversible oxidation of the active center dithiol to a disulfide. The H form is known to activate a number of cytosolic enzymes. This Brassica campestris (Field mustard) protein is Thioredoxin H-type (PEC-2).